An 82-amino-acid polypeptide reads, in one-letter code: Large ribosomal subunit protein bL28 (82 aa).

Residues 1–25 are disordered; the sequence is MAKVDQITKKRAMTGNTRSHALNHS.

The protein belongs to the bacterial ribosomal protein bL28 family.

This chain is Large ribosomal subunit protein bL28, found in Malacoplasma penetrans (strain HF-2) (Mycoplasma penetrans).